Reading from the N-terminus, the 290-residue chain is Shikimate kinase (290 aa).

An ATP-binding site is contributed by 81-91 (PIASGLKSSSA).

The protein belongs to the GHMP kinase family. Archaeal shikimate kinase subfamily.

The protein localises to the cytoplasm. The catalysed reaction is shikimate + ATP = 3-phosphoshikimate + ADP + H(+). It participates in metabolic intermediate biosynthesis; chorismate biosynthesis; chorismate from D-erythrose 4-phosphate and phosphoenolpyruvate: step 5/7. The sequence is that of Shikimate kinase from Methanocella arvoryzae (strain DSM 22066 / NBRC 105507 / MRE50).